Reading from the N-terminus, the 176-residue chain is MNAEKDSPLPKPQWVYRVGIGQDSHRFLSESSAKPCILAGVIFENSPGFQANSDGDIVFHAICNAISSVTHRIILGDVADELFHTRGITDSSIYLSEAIKSLKPNQLISHVAITIEGNRPKFLPKLSAMRQSIASALNISLGSVGITATSGEGLSDFGCGDGVQCFCVLTVMEYCG.

3 residues coordinate a divalent metal cation: Asp-23, His-25, and His-60. Asp-23–His-25 is a 4-CDP-2-C-methyl-D-erythritol 2-phosphate binding site. Thr-149–Glu-152 is a 4-CDP-2-C-methyl-D-erythritol 2-phosphate binding site.

Belongs to the IspF family. As to quaternary structure, homotrimer. A divalent metal cation serves as cofactor.

The enzyme catalyses 4-CDP-2-C-methyl-D-erythritol 2-phosphate = 2-C-methyl-D-erythritol 2,4-cyclic diphosphate + CMP. The protein operates within isoprenoid biosynthesis; isopentenyl diphosphate biosynthesis via DXP pathway; isopentenyl diphosphate from 1-deoxy-D-xylulose 5-phosphate: step 4/6. Its function is as follows. Involved in the biosynthesis of isopentenyl diphosphate (IPP) and dimethylallyl diphosphate (DMAPP), two major building blocks of isoprenoid compounds. Catalyzes the conversion of 4-diphosphocytidyl-2-C-methyl-D-erythritol 2-phosphate (CDP-ME2P) to 2-C-methyl-D-erythritol 2,4-cyclodiphosphate (ME-CPP) with a corresponding release of cytidine 5-monophosphate (CMP). The polypeptide is 2-C-methyl-D-erythritol 2,4-cyclodiphosphate synthase (Chlamydia felis (strain Fe/C-56) (Chlamydophila felis)).